The chain runs to 391 residues: Esterase (391 aa).

An N-terminal signal peptide occupies residues 1–26 (MEFPETNNNPIITLSFLLCMLSLAYA). Ser41 functions as the Nucleophile in the catalytic mechanism. N-linked (GlcNAc...) asparagine glycosylation is found at Asn186, Asn193, and Asn313. Catalysis depends on residues Asp347 and His350.

The protein belongs to the 'GDSL' lipolytic enzyme family. The N-terminus is blocked. Post-translationally, glycosylated.

In terms of biological role, has lipase and esterase activities. May be involved in plant defense. In Hevea brasiliensis (Para rubber tree), this protein is Esterase.